The primary structure comprises 417 residues: Gamma-glutamyl phosphate reductase (417 aa).

This sequence belongs to the gamma-glutamyl phosphate reductase family.

The protein localises to the cytoplasm. The enzyme catalyses L-glutamate 5-semialdehyde + phosphate + NADP(+) = L-glutamyl 5-phosphate + NADPH + H(+). It functions in the pathway amino-acid biosynthesis; L-proline biosynthesis; L-glutamate 5-semialdehyde from L-glutamate: step 2/2. Its function is as follows. Catalyzes the NADPH-dependent reduction of L-glutamate 5-phosphate into L-glutamate 5-semialdehyde and phosphate. The product spontaneously undergoes cyclization to form 1-pyrroline-5-carboxylate. The polypeptide is Gamma-glutamyl phosphate reductase (Bacteroides thetaiotaomicron (strain ATCC 29148 / DSM 2079 / JCM 5827 / CCUG 10774 / NCTC 10582 / VPI-5482 / E50)).